The primary structure comprises 103 residues: Putative membrane protein insertion efficiency factor (103 aa).

Belongs to the UPF0161 family.

The protein localises to the cell membrane. In terms of biological role, could be involved in insertion of integral membrane proteins into the membrane. In Clavibacter sepedonicus (Clavibacter michiganensis subsp. sepedonicus), this protein is Putative membrane protein insertion efficiency factor.